Reading from the N-terminus, the 71-residue chain is Conotoxin Bu23 (71 aa).

The N-terminal stretch at Met-1–Ser-21 is a signal peptide. Residues Leu-22 to Lys-37 constitute a propeptide that is removed on maturation. The residue at position 70 (Asn-70) is an Asparagine amide.

It belongs to the conotoxin A superfamily. In terms of processing, contains 3 disulfide bonds. They are not indicated here, since framework IV presents two different connectivities (I-V, II-III, IV-VI and I-III, II-V, IV-VI). In terms of tissue distribution, expressed by the venom duct.

The protein resides in the secreted. This Conus bullatus (Bubble cone) protein is Conotoxin Bu23.